Here is a 207-residue protein sequence, read N- to C-terminus: Probable GTP-binding protein EngB (207 aa).

Residues 23-203 enclose the EngB-type G domain; the sequence is GAPEVCFVGR…GAHIENWISP (181 aa). GTP-binding positions include 31–38, 58–62, 83–86, 150–153, and 182–184; these read GRSNAGKS, GRTRL, DLPG, TKAD, and FSS. Positions 38 and 60 each coordinate Mg(2+).

This sequence belongs to the TRAFAC class TrmE-Era-EngA-EngB-Septin-like GTPase superfamily. EngB GTPase family. Requires Mg(2+) as cofactor.

Functionally, necessary for normal cell division and for the maintenance of normal septation. The chain is Probable GTP-binding protein EngB from Bordetella bronchiseptica (strain ATCC BAA-588 / NCTC 13252 / RB50) (Alcaligenes bronchisepticus).